Consider the following 341-residue polypeptide: Holliday junction branch migration complex subunit RuvB (341 aa).

Residues 1-22 (MSETAGKGVTMPEIMQSSYPDE) form a disordered region. The large ATPase domain (RuvB-L) stretch occupies residues 4–193 (TAGKGVTMPE…FGIISRLEFY (190 aa)). ATP is bound by residues Ile32, Arg33, Gly74, Lys77, Thr78, Thr79, 140-142 (EDY), Arg183, Tyr193, and Arg230. Thr78 contributes to the Mg(2+) binding site. Residues 194–264 (TPEELSQIIL…LVNHALQKLD (71 aa)) form a small ATPAse domain (RuvB-S) region. The head domain (RuvB-H) stretch occupies residues 267-341 (EKGLDQMDRK…KAYKHLNLTD (75 aa)). 2 residues coordinate DNA: Arg322 and Arg327.

Belongs to the RuvB family. As to quaternary structure, homohexamer. Forms an RuvA(8)-RuvB(12)-Holliday junction (HJ) complex. HJ DNA is sandwiched between 2 RuvA tetramers; dsDNA enters through RuvA and exits via RuvB. An RuvB hexamer assembles on each DNA strand where it exits the tetramer. Each RuvB hexamer is contacted by two RuvA subunits (via domain III) on 2 adjacent RuvB subunits; this complex drives branch migration. In the full resolvosome a probable DNA-RuvA(4)-RuvB(12)-RuvC(2) complex forms which resolves the HJ.

The protein localises to the cytoplasm. The enzyme catalyses ATP + H2O = ADP + phosphate + H(+). The RuvA-RuvB-RuvC complex processes Holliday junction (HJ) DNA during genetic recombination and DNA repair, while the RuvA-RuvB complex plays an important role in the rescue of blocked DNA replication forks via replication fork reversal (RFR). RuvA specifically binds to HJ cruciform DNA, conferring on it an open structure. The RuvB hexamer acts as an ATP-dependent pump, pulling dsDNA into and through the RuvAB complex. RuvB forms 2 homohexamers on either side of HJ DNA bound by 1 or 2 RuvA tetramers; 4 subunits per hexamer contact DNA at a time. Coordinated motions by a converter formed by DNA-disengaged RuvB subunits stimulates ATP hydrolysis and nucleotide exchange. Immobilization of the converter enables RuvB to convert the ATP-contained energy into a lever motion, pulling 2 nucleotides of DNA out of the RuvA tetramer per ATP hydrolyzed, thus driving DNA branch migration. The RuvB motors rotate together with the DNA substrate, which together with the progressing nucleotide cycle form the mechanistic basis for DNA recombination by continuous HJ branch migration. Branch migration allows RuvC to scan DNA until it finds its consensus sequence, where it cleaves and resolves cruciform DNA. This is Holliday junction branch migration complex subunit RuvB from Lawsonia intracellularis (strain PHE/MN1-00).